Here is a 421-residue protein sequence, read N- to C-terminus: Imidazolonepropionase (421 aa).

2 residues coordinate Fe(3+): histidine 80 and histidine 82. Zn(2+)-binding residues include histidine 80 and histidine 82. 3 residues coordinate 4-imidazolone-5-propanoate: arginine 89, tyrosine 152, and histidine 185. Tyrosine 152 contacts N-formimidoyl-L-glutamate. Histidine 249 is a Fe(3+) binding site. Histidine 249 lines the Zn(2+) pocket. Glutamate 252 contributes to the 4-imidazolone-5-propanoate binding site. Residue aspartate 324 participates in Fe(3+) binding. Aspartate 324 contacts Zn(2+). The N-formimidoyl-L-glutamate site is built by asparagine 326 and glycine 328. Serine 329 is a binding site for 4-imidazolone-5-propanoate.

It belongs to the metallo-dependent hydrolases superfamily. HutI family. Homodimer. The cofactor is Zn(2+). Fe(3+) serves as cofactor.

The protein localises to the cytoplasm. The enzyme catalyses 4-imidazolone-5-propanoate + H2O = N-formimidoyl-L-glutamate. The protein operates within amino-acid degradation; L-histidine degradation into L-glutamate; N-formimidoyl-L-glutamate from L-histidine: step 3/3. Functionally, catalyzes the hydrolytic cleavage of the carbon-nitrogen bond in imidazolone-5-propanoate to yield N-formimidoyl-L-glutamate. It is the third step in the universal histidine degradation pathway. This chain is Imidazolonepropionase, found in Bacillus subtilis (strain 168).